Here is a 131-residue protein sequence, read N- to C-terminus: Antiholin (131 aa).

The Periplasmic segment spans residues 1-14 (MKMIAWMQHFLETD). Cytoplasmic loops occupy residues 1–52 (MKMI…SSFK) and 38–49 (LFAKLNPNIKFS). A helical membrane pass occupies residues 15–37 (ETKLIYWLTFLMVCMVVDTVLGV). A helical membrane pass occupies residues 53–75 (IKTGVLIKVSEMILALLAIPFAV). Residues 76 to 78 (PFP) lie on the Periplasmic side of the membrane. A helical transmembrane segment spans residues 79-101 (AGLPLLYTVYTALCVSEIYSIFG). Topologically, residues 102-131 (HLRLVDDKSDFLEILENFFKRTSGKNKEEK) are cytoplasmic.

Belongs to the bacteriophage holin family. phi29likevirus holin subfamily. In terms of assembly, homomultimer. Interacts with isoform Antiholin; this interaction blocks the holin homomultimerization and delays host cell lysis.

It localises to the host cell inner membrane. Its function is as follows. Accumulates harmlessly in the cytoplasmic membrane until it reaches a critical concentration that triggers the formation of micron-scale pores (holes) causing host cell membrane disruption and endolysin escape into the periplasmic space. Determines the precise timing of host cell lysis. Participates with the endolysin and spanin proteins in the sequential events which lead to the programmed host cell lysis releasing the mature viral particles from the host cell. Counteracts the aggregation of the holin molecules and thus of pore formation. This chain is Antiholin (14), found in Bacillus subtilis (Bacteriophage phi-29).